The primary structure comprises 122 residues: UPF0482 protein Spro_2288 (122 aa).

Positions Met1–Ala31 are cleaved as a signal peptide. The disordered stretch occupies residues Ser46 to Asn71.

This sequence belongs to the UPF0482 family.

The sequence is that of UPF0482 protein Spro_2288 from Serratia proteamaculans (strain 568).